The chain runs to 20 residues: Unknown protein NF007 from 2D-PAGE (20 aa).

This is Unknown protein NF007 from 2D-PAGE from Naegleria fowleri (Brain eating amoeba).